Consider the following 278-residue polypeptide: 3-methyl-2-oxobutanoate hydroxymethyltransferase (278 aa).

Asp43 and Asp82 together coordinate Mg(2+). Residues 43–44, Asp82, and Lys112 each bind 3-methyl-2-oxobutanoate; that span reads DS. Position 114 (Glu114) interacts with Mg(2+). Glu181 (proton acceptor) is an active-site residue.

The protein belongs to the PanB family. In terms of assembly, homodecamer; pentamer of dimers. Mg(2+) serves as cofactor.

The protein localises to the cytoplasm. It catalyses the reaction 3-methyl-2-oxobutanoate + (6R)-5,10-methylene-5,6,7,8-tetrahydrofolate + H2O = 2-dehydropantoate + (6S)-5,6,7,8-tetrahydrofolate. It functions in the pathway cofactor biosynthesis; (R)-pantothenate biosynthesis; (R)-pantoate from 3-methyl-2-oxobutanoate: step 1/2. Its function is as follows. Catalyzes the reversible reaction in which hydroxymethyl group from 5,10-methylenetetrahydrofolate is transferred onto alpha-ketoisovalerate to form ketopantoate. This is 3-methyl-2-oxobutanoate hydroxymethyltransferase from Bacillus cereus (strain B4264).